The following is a 399-amino-acid chain: MKILVINSGSSSIKFKFYDLKIQKCLASGMIEQIGDEVSHSKIETCDGKTIEENMEIRTHDEGIVILNRYLKETGVLTDLKEIDGVGHRIVQGADYFEGPALVDDDVITKIEELIPLAPLHNPAHLSGIRSSLRHAPCLPNVVVFDNTFYHNIPDYAYMYALPYKFYEKYRVRKFGAHGISHEFVTKKGADFLGIDYKNFCVISLHIGSGSSISATKDGICIDTSMGLTPLEGLMMSTRCGSVDPAIIPYMKRVAGYLSEDIDTIMNKKSGLLGITGTSDFRKVLERMHKGDERAKLAFDMLTYQIVKIIGSYYAILPRVDAIIWTAGIGENSAELRESVSKRLAHFGVGVDETVNVNCIKKPTDISSQNATIKTLVIPTDEEYSIAKATERILLSLKK.

Position 7 (Asn7) interacts with Mg(2+). Lys14 lines the ATP pocket. Arg89 is a substrate binding site. The active-site Proton donor/acceptor is Asp146. Residues 206 to 210, 280 to 282, and 328 to 332 contribute to the ATP site; these read HIGSG, DFR, and GIGEN. Mg(2+) is bound at residue Glu382.

Belongs to the acetokinase family. Homodimer. Requires Mg(2+) as cofactor. Mn(2+) serves as cofactor.

The protein resides in the cytoplasm. The enzyme catalyses acetate + ATP = acetyl phosphate + ADP. The protein operates within metabolic intermediate biosynthesis; acetyl-CoA biosynthesis; acetyl-CoA from acetate: step 1/2. Catalyzes the formation of acetyl phosphate from acetate and ATP. Can also catalyze the reverse reaction. The chain is Acetate kinase from Campylobacter hominis (strain ATCC BAA-381 / DSM 21671 / CCUG 45161 / LMG 19568 / NCTC 13146 / CH001A).